Consider the following 151-residue polypeptide: Large ribosomal subunit protein bL9 (151 aa).

The protein belongs to the bacterial ribosomal protein bL9 family.

Binds to the 23S rRNA. This chain is Large ribosomal subunit protein bL9, found in Mycolicibacterium vanbaalenii (strain DSM 7251 / JCM 13017 / BCRC 16820 / KCTC 9966 / NRRL B-24157 / PYR-1) (Mycobacterium vanbaalenii).